Reading from the N-terminus, the 313-residue chain is D-alanine--D-alanine ligase (313 aa).

The 201-residue stretch at 108 to 308 (KLVWQQTGVP…YSELVVKVLS (201 aa)) folds into the ATP-grasp domain. 138–193 (VAKLGLPLFVKPASEGSSVAVLKVKTADALPAALSEAATHDKIVIVEKSIEGGGEY) contributes to the ATP binding site. The Mg(2+) site is built by Asp-262, Glu-275, and Asn-277.

Belongs to the D-alanine--D-alanine ligase family. It depends on Mg(2+) as a cofactor. Mn(2+) is required as a cofactor.

It localises to the cytoplasm. The catalysed reaction is 2 D-alanine + ATP = D-alanyl-D-alanine + ADP + phosphate + H(+). The protein operates within cell wall biogenesis; peptidoglycan biosynthesis. Functionally, cell wall formation. In Burkholderia ambifaria (strain MC40-6), this protein is D-alanine--D-alanine ligase.